Here is a 529-residue protein sequence, read N- to C-terminus: GTPase Obg (529 aa).

An Obg domain is found at 2 to 159; sequence ASFVDRVVLH…SDIVLELKSI (158 aa). Positions 160–343 constitute an OBG-type G domain; the sequence is ADIALVGFPS…LGFAMAEIVK (184 aa). GTP is bound by residues 166-173, 191-195, 212-215, 295-298, and 324-326; these read GFPSAGKS, FTTLI, DVPG, NKVD, and SAT. The Mg(2+) site is built by serine 173 and threonine 193. The region spanning 363 to 447 is the OCT domain; that stretch reads PRAVNEAGFK…DDGVVFDWEP (85 aa). Basic and acidic residues predominate over residues 466 to 502; that stretch reads FADIGDRPTRGQKRDEQQERRDAKAAARAELEAERKA. The tract at residues 466 to 529 is disordered; that stretch reads FADIGDRPTR…ESGLTTENEE (64 aa).

The protein belongs to the TRAFAC class OBG-HflX-like GTPase superfamily. OBG GTPase family. As to quaternary structure, monomer. The cofactor is Mg(2+).

It is found in the cytoplasm. Its function is as follows. An essential GTPase which binds GTP, GDP and possibly (p)ppGpp with moderate affinity, with high nucleotide exchange rates and a fairly low GTP hydrolysis rate. Plays a role in control of the cell cycle, stress response, ribosome biogenesis and in those bacteria that undergo differentiation, in morphogenesis control. The protein is GTPase Obg of Arthrobacter sp. (strain FB24).